A 326-amino-acid chain; its full sequence is 3-dehydrosphinganine reductase TSC10A (326 aa).

Residues 1-7 (MAAISPL) are Lumenal-facing. The helical transmembrane segment at 8 to 28 (FLLFLIPIIPLSLLAILALIV) threads the bilayer. Topologically, residues 29–264 (RPRPIKIPIK…KAMDGIKAGN (236 aa)) are cytoplasmic. Positions 46, 48, 49, 50, 71, 75, and 97 each coordinate NADPH. Residues 46–50 (GGSSG) carry the GXSXG motif. Catalysis depends on Ser-174, which acts as the Proton donor. The Proton acceptor role is filled by Tyr-188. Residues Tyr-188 and Lys-192 each contribute to the NADP(+) site. Lys-192 serves as the catalytic Lowers pKa of active site Tyr. Residues 265–285 (FTVSCNFEGFLLSLATTGMSP) form a helical membrane-spanning segment. The Lumenal portion of the chain corresponds to 286-288 (QRS). Residues 289-309 (FWLAFLEVITAGPIRLIALFF) traverse the membrane as a helical segment. The Cytoplasmic portion of the chain corresponds to 310-326 (QWDWYKAIEKWSKTKTK).

This sequence belongs to the short-chain dehydrogenases/reductases (SDR) family. As to expression, expressed in roots, leaves, stems, flowers and siliques.

Its subcellular location is the endoplasmic reticulum membrane. It carries out the reaction sphinganine + NADP(+) = 3-oxosphinganine + NADPH + H(+). Its pathway is lipid metabolism; sphingolipid metabolism. In terms of biological role, catalyzes the reduction of 3'-oxosphinganine (3-ketodihydrosphingosine/KDS) to sphinganine (dihydrosphingosine/DHS), the second step of de novo sphingolipid biosynthesis. In plants, sphingolipids seems to play a critical role in mineral ion homeostasis, most likely through their involvement in the ion transport functionalities of membrane systems in the root. Lacks stereospecificity and can also produce L-threo-DHS in addition to D-erythro-DHS. The protein is 3-dehydrosphinganine reductase TSC10A (TSC10A) of Arabidopsis thaliana (Mouse-ear cress).